The following is a 630-amino-acid chain: Tyrosinase (630 aa).

Residues His-69, His-92, His-101, His-317, His-321, and His-360 each contribute to the Cu cation site. Residues 90-92 constitute a cross-link (2'-(S-cysteinyl)-histidine (Cys-His)); it reads CVH.

Belongs to the tyrosinase family. Cu(2+) serves as cofactor.

The catalysed reaction is 2 L-dopa + O2 = 2 L-dopaquinone + 2 H2O. It carries out the reaction L-tyrosine + O2 = L-dopaquinone + H2O. Its function is as follows. This is a copper-containing oxidase that functions in the formation of pigments such as melanins and other polyphenolic compounds. The protein is Tyrosinase (tyr1) of Aspergillus fumigatus (strain ATCC MYA-4609 / CBS 101355 / FGSC A1100 / Af293) (Neosartorya fumigata).